A 398-amino-acid chain; its full sequence is Succinate--CoA ligase [ADP-forming] subunit beta (398 aa).

In terms of domain architecture, ATP-grasp spans 9-254 (KRLLHEYGAP…ISEEDPKEIE (246 aa)). ATP is bound by residues K46, 53 to 55 (GRG), E109, A112, and E117. Mg(2+) contacts are provided by N209 and D223. Residues N274 and 331–333 (GIM) contribute to the substrate site.

Belongs to the succinate/malate CoA ligase beta subunit family. As to quaternary structure, heterotetramer of two alpha and two beta subunits. Mg(2+) is required as a cofactor.

The catalysed reaction is succinate + ATP + CoA = succinyl-CoA + ADP + phosphate. It catalyses the reaction GTP + succinate + CoA = succinyl-CoA + GDP + phosphate. It participates in carbohydrate metabolism; tricarboxylic acid cycle; succinate from succinyl-CoA (ligase route): step 1/1. Its function is as follows. Succinyl-CoA synthetase functions in the citric acid cycle (TCA), coupling the hydrolysis of succinyl-CoA to the synthesis of either ATP or GTP and thus represents the only step of substrate-level phosphorylation in the TCA. The beta subunit provides nucleotide specificity of the enzyme and binds the substrate succinate, while the binding sites for coenzyme A and phosphate are found in the alpha subunit. The sequence is that of Succinate--CoA ligase [ADP-forming] subunit beta from Bartonella bacilliformis (strain ATCC 35685 / KC583 / Herrer 020/F12,63).